The following is a 171-amino-acid chain: HTH-type transcriptional regulator AldR (171 aa).

Positions 1 to 14 are enriched in polar residues; it reads MSEGSSITGVQTPG. The segment at 1 to 21 is disordered; that stretch reads MSEGSSITGVQTPGSPKDVRA. Positions 24-85 constitute an HTH asnC-type domain; sequence LDDIDRRILL…DIDPAAVGLG (62 aa). The segment at residues 43–62 is a DNA-binding region (H-T-H motif); it reads NSALAEMVGIAPSTCHGRVR.

As to quaternary structure, homodimer in the absence of L-alanine. Homooctamer in the presence of L-alanine. Homotetramers in the presence of L-cysteine.

In the presence of alanine, AldR changes its quaternary structure from a homodimer to an octamer with an open-ring conformation. The binding affinity of AldR for the ald control region is increased significantly by L-alanine. In vitro, L-cysteine also increases the binding affinity of AldR for the target DNA. Its function is as follows. Transcriptional regulator that might play a role under hypoxic conditions. Regulates the expression of ald, which encodes L-alanine dehydrogenase. Serves as both an activator for ald expression in the presence of L-alanine and a repressor in the absence of L-alanine. Acts by binding directly to the upstream region of the ald gene. Four AldR-binding sites (O2, O1, O4 and O3) were identified upstream of the ald gene. O2, O1 and O4 are required for the induction of ald expression by alanine, while O3 is directly involved in the repression of ald expression, by occluding the access of RNA polymerase to the ald promoter. In addition to O3, both O1 and O4 are also necessary for full repression of ald expression in the absence of alanine. The sequence is that of HTH-type transcriptional regulator AldR from Mycolicibacterium smegmatis (strain ATCC 700084 / mc(2)155) (Mycobacterium smegmatis).